Consider the following 361-residue polypeptide: S-adenosylmethionine:tRNA ribosyltransferase-isomerase (361 aa).

The protein belongs to the QueA family. In terms of assembly, monomer.

The protein localises to the cytoplasm. It carries out the reaction 7-aminomethyl-7-carbaguanosine(34) in tRNA + S-adenosyl-L-methionine = epoxyqueuosine(34) in tRNA + adenine + L-methionine + 2 H(+). It functions in the pathway tRNA modification; tRNA-queuosine biosynthesis. Transfers and isomerizes the ribose moiety from AdoMet to the 7-aminomethyl group of 7-deazaguanine (preQ1-tRNA) to give epoxyqueuosine (oQ-tRNA). This Actinobacillus pleuropneumoniae serotype 5b (strain L20) protein is S-adenosylmethionine:tRNA ribosyltransferase-isomerase.